Here is a 440-residue protein sequence, read N- to C-terminus: Enolase (440 aa).

2 residues coordinate substrate: H159 and E168. E211 functions as the Proton donor in the catalytic mechanism. Mg(2+) contacts are provided by D245, E296, and D321. Substrate is bound by residues E296 and D321. The Proton acceptor role is filled by K346. Substrate is bound by residues 373 to 376 and K397; that span reads SHRS.

This sequence belongs to the enolase family. Homodimer. Mg(2+) is required as a cofactor.

The protein localises to the cytoplasm. The enzyme catalyses (2R)-2-phosphoglycerate = phosphoenolpyruvate + H2O. It functions in the pathway carbohydrate degradation; glycolysis; pyruvate from D-glyceraldehyde 3-phosphate: step 4/5. The sequence is that of Enolase (eno-1) from Tuber borchii (White truffle).